Reading from the N-terminus, the 992-residue chain is Meckelin (992 aa).

A signal peptide spans 1-36 (MVTRTRPVAAMAVRSRSSSRTGTAYLLLVLCEVSWA). The interval 37–280 (QIFSFPFRRP…FHYIFESTAG (244 aa)) is cysteine-rich. Residues 37-516 (QIFSFPFRRP…SVKYEMNQGD (480 aa)) lie on the Extracellular side of the membrane. Cystine bridges form between C49/C62, C65/C78, C80/C97, C100/C114, C117/C127, C129/C150, C153/C170, C173/C184, C186/C197, C237/C246, C253/C268, and C354/C375. N242 is a glycosylation site (N-linked (GlcNAc...) asparagine). Residues 517-545 (ASVHTDIALGVLGGLAVLSSLLKTAGWKR) traverse the membrane as a helical segment. The Cytoplasmic portion of the chain corresponds to 546 to 555 (RVGSPMIDLQ). The helical transmembrane segment at 556–587 (TVMKFLLYYAGDLANVFFIITVGTGLYWLIFF) threads the bilayer. Topologically, residues 588–600 (KAQKSVSVLLPMP) are extracellular. The helical transmembrane segment at 601-628 (VQEERFVTYVGCAFAMKALQFLHKFISQ) threads the bilayer. Residues 629–667 (ISIDIFFIDWERPKGKVLKAVEGEGGVRSATVPVSIWRT) lie on the Cytoplasmic side of the membrane. Positions 668-676 (YFVANEWNE) form an intramembrane region, helical. The discontinuously helical transmembrane segment at 668–698 (YFVANEWNEIQTVRKINPLFQVLTTLFFLEV) threads the bilayer. Residues 677–685 (IQTVRKINP) lie within the membrane without spanning it. Residues 686-698 (LFQVLTTLFFLEV) constitute an intramembrane region (helical). The Extracellular portion of the chain corresponds to 699–728 (VGFKNLALMDSSSSLSRNPSDYTAPYSRIL). An intramembrane region (helical) is located at residues 729-754 (RYAVATAIWLVIGIIQVVFFAAFYER). The discontinuously helical transmembrane segment at 729 to 768 (RYAVATAIWLVIGIIQVVFFAAFYERFIEDKIRQFVDLCS) threads the bilayer. The stretch at 755–759 (FIEDK) is an intramembrane region. Positions 760 to 768 (IRQFVDLCS) form an intramembrane region, helical. Over 769–923 (MSNVSVFLLS…SIFYNDEGHS (155 aa)) the chain is Cytoplasmic. Residues 924–926 (FSS) constitute an intramembrane region (helical). The discontinuously helical transmembrane segment at 924–949 (FSSVLYYGNEATLLIFDLLFFCVVDL) threads the bilayer. The stretch at 927-933 (VLYYGNE) is an intramembrane region. The helical intramembrane region spans 934–949 (ATLLIFDLLFFCVVDL). The Extracellular portion of the chain corresponds to 950 to 954 (ACQDF). The chain crosses the membrane as a helical span at residues 955 to 982 (VLASFLTYLQQEIFRFIRNTVGQKNLAT). Residues 983–992 (KTLVDERFLI) are Cytoplasmic-facing.

As to quaternary structure, homodimer. Part of the tectonic-like complex (also named B9 complex). Interacts with DNAJB9, DNAJC10 and mutated SFTPC. Interacts with SYNE2 during the early establishment of cell polarity. Interacts (via C-terminus) with FLNA. Interacts with TMEM218. Interacts with WNT5A. Interacts with ROR2.

It localises to the cell membrane. It is found in the endoplasmic reticulum membrane. Its subcellular location is the cytoplasm. The protein localises to the cytoskeleton. The protein resides in the cilium basal body. Functionally, part of the tectonic-like complex which is required for tissue-specific ciliogenesis and may regulate ciliary membrane composition. Involved in centrosome migration to the apical cell surface during early ciliogenesis. Required for ciliary structure and function, including a role in regulating length and appropriate number through modulating centrosome duplication. Is a key regulator of stereociliary bundle orientation. Required for epithelial cell branching morphology. Essential for endoplasmic reticulum-associated degradation (ERAD) of surfactant protein C (sftpc). Involved in the negative regulation of canonical Wnt signaling, and activation of the non-canonical cascade stimulated by WNT5A. In non-canonical Wnt signaling, it may act as ROR2 coreceptor. The polypeptide is Meckelin (Tmem67) (Mus musculus (Mouse)).